Consider the following 418-residue polypeptide: S-adenosylmethionine synthase (418 aa).

Histidine 16 contributes to the ATP binding site. A Mg(2+)-binding site is contributed by aspartate 18. Glutamate 44 provides a ligand contact to K(+). L-methionine is bound by residues glutamate 57 and glutamine 100. Positions 100–110 (QSPDIAQGVDS) are flexible loop. ATP contacts are provided by residues 174 to 176 (DGK), aspartate 259, 265 to 266 (RK), alanine 282, and lysine 286. Residue aspartate 259 participates in L-methionine binding. Lysine 290 is a binding site for L-methionine.

It belongs to the AdoMet synthase family. Homotetramer; dimer of dimers. Mg(2+) serves as cofactor. It depends on K(+) as a cofactor.

It is found in the cytoplasm. The catalysed reaction is L-methionine + ATP + H2O = S-adenosyl-L-methionine + phosphate + diphosphate. It participates in amino-acid biosynthesis; S-adenosyl-L-methionine biosynthesis; S-adenosyl-L-methionine from L-methionine: step 1/1. Catalyzes the formation of S-adenosylmethionine (AdoMet) from methionine and ATP. The overall synthetic reaction is composed of two sequential steps, AdoMet formation and the subsequent tripolyphosphate hydrolysis which occurs prior to release of AdoMet from the enzyme. The chain is S-adenosylmethionine synthase from Acaryochloris marina (strain MBIC 11017).